The sequence spans 156 residues: Transcription elongation factor GreA (156 aa).

A coiled-coil region spans residues 8-75; the sequence is LTKEGYEKLK…ELENMLSKAE (68 aa).

The protein belongs to the GreA/GreB family.

Functionally, necessary for efficient RNA polymerase transcription elongation past template-encoded arresting sites. The arresting sites in DNA have the property of trapping a certain fraction of elongating RNA polymerases that pass through, resulting in locked ternary complexes. Cleavage of the nascent transcript by cleavage factors such as GreA or GreB allows the resumption of elongation from the new 3'terminus. GreA releases sequences of 2 to 3 nucleotides. The sequence is that of Transcription elongation factor GreA from Thermosipho melanesiensis (strain DSM 12029 / CIP 104789 / BI429).